The primary structure comprises 130 residues: Small ribosomal subunit protein uS9 (130 aa).

This sequence belongs to the universal ribosomal protein uS9 family.

The protein is Small ribosomal subunit protein uS9 of Pseudomonas fluorescens (strain Pf0-1).